Consider the following 330-residue polypeptide: Electron transfer flavoprotein subunit alpha (330 aa).

An FAD-binding site is contributed by 270–298 (LYIACGISGAIQHLAGMSNSGTIVAINKN).

Belongs to the ETF alpha-subunit/FixB family. As to quaternary structure, heterodimer of an alpha and a beta subunit. FAD is required as a cofactor.

Its function is as follows. The electron transfer flavoprotein serves as a specific electron acceptor for other dehydrogenases. It transfers the electrons to the main respiratory chain via ETF-ubiquinone oxidoreductase (ETF dehydrogenase). The chain is Electron transfer flavoprotein subunit alpha (etfA) from Thermoanaerobacterium thermosaccharolyticum (strain ATCC 7956 / DSM 571 / NCIMB 9385 / NCA 3814 / NCTC 13789 / WDCM 00135 / 2032) (Clostridium thermosaccharolyticum).